The chain runs to 381 residues: Chaperone protein DnaJ (381 aa).

The 66-residue stretch at 4 to 69 (DYYEILGVAR…EKRARYDQFG (66 aa)) folds into the J domain. The CR-type zinc finger occupies 139-221 (GGEKELRVTR…CGGSGLVRKT (83 aa)). Residues Cys152, Cys155, Cys169, Cys172, Cys195, Cys198, Cys209, and Cys212 each contribute to the Zn(2+) site. 4 CXXCXGXG motif repeats span residues 152–159 (CGHCHGNG), 169–176 (CPTCQGRG), 195–202 (CSTCRGEG), and 209–216 (CRECGGSG).

The protein belongs to the DnaJ family. Homodimer. Zn(2+) is required as a cofactor.

Its subcellular location is the cytoplasm. Its function is as follows. Participates actively in the response to hyperosmotic and heat shock by preventing the aggregation of stress-denatured proteins and by disaggregating proteins, also in an autonomous, DnaK-independent fashion. Unfolded proteins bind initially to DnaJ; upon interaction with the DnaJ-bound protein, DnaK hydrolyzes its bound ATP, resulting in the formation of a stable complex. GrpE releases ADP from DnaK; ATP binding to DnaK triggers the release of the substrate protein, thus completing the reaction cycle. Several rounds of ATP-dependent interactions between DnaJ, DnaK and GrpE are required for fully efficient folding. Also involved, together with DnaK and GrpE, in the DNA replication of plasmids through activation of initiation proteins. The sequence is that of Chaperone protein DnaJ from Carboxydothermus hydrogenoformans (strain ATCC BAA-161 / DSM 6008 / Z-2901).